The sequence spans 336 residues: Atypical chemokine receptor 1 (336 aa).

A mediates Plasmodium vivax Duffy receptor (PVDR) binding region spans residues 1–30 (MGNCLHRAELSPSTENSSQLDFEDVWNSSY). Residues 1–63 (MGNCLHRAEL…CNLLDDSALP (63 aa)) lie on the Extracellular side of the membrane. N16 is a glycosylation site (N-linked (GlcNAc...) asparagine). Position 30 is a sulfotyrosine (Y30). N33 is a glycosylation site (N-linked (GlcNAc...) asparagine). Y41 carries the sulfotyrosine modification. Disulfide bonds link C51–C276 and C129–C195. Residues 64 to 84 (FFILTSVLGILASSTVLFMLF) form a helical membrane-spanning segment. Residues 85-95 (RPLFRWQLCPG) lie on the Cytoplasmic side of the membrane. Residues 96 to 116 (WPVLAQLAVGSALFSIVVPVL) form a helical membrane-spanning segment. At 117–129 (APGLGSTRSSALC) the chain is on the extracellular side. Residues 130 to 153 (SLGYCVWYGSAFAQALLLGCHASL) form a helical membrane-spanning segment. Over 154–166 (GHRLGAGQVPGLT) the chain is Cytoplasmic. A helical membrane pass occupies residues 167–187 (LGLTVGIWGVAALLTLPVTLA). The Extracellular segment spans residues 188–207 (SGASGGLCTLIYSTELKALQ). The chain crosses the membrane as a helical span at residues 208-228 (ATHTVACLAIFVLLPLGLFGA). Residues 229–244 (KGLKKALGMGPGPWMN) are Cytoplasmic-facing. The helical transmembrane segment at 245–265 (ILWAWFIFWWPHGVVLGLDFL) threads the bilayer. At 266-287 (VRSKLLLLSTCLAQQALDLLLN) the chain is on the extracellular side. The helical transmembrane segment at 288–308 (LAEALAILHCVATPLLLALFC) threads the bilayer. Over 309–336 (HQATRTLLPSLPLPEGWSSHLDTLGSKS) the chain is Cytoplasmic.

Belongs to the G-protein coupled receptor 1 family. Atypical chemokine receptor subfamily. (Microbial infection) Interacts (via N-terminal extracellular domain) with Plasmodium vivax Duffy receptor (PVDR) (via PvRII region). As to quaternary structure, (Microbial infection) Interacts (via N-terminal extracellular domain) with Plasmodium knowlesi Duffy receptor alpha form (DBPalpha) (via region II). Sulfation at Tyr-41 facilitates interaction with MGSA/CXCL1, RANTES/CCL5 and MCP-1/CCL2 but not IL8/CXCL8. Sulfation at Tyr-30 facilitates interaction with IL8/CXCL8. Post-translationally, (Microbial infection) Sulfation at Tyr-41 facilitates interaction with Plasmodium vivax Duffy receptor (PVDR). Sulfation at Tyr-30/Tyr-41 and Tyr-41 alone increases binding affinity of Plasmodium vivax parasites and likely promotes invasion of red blood cells. In terms of processing, (Microbial infection) Sulfation at Tyr-41 facilitates interaction with Plasmodium knowlesi Duffy receptor alpha form (DBPalpha). Sulfation at Tyr-30/Tyr-41 and Tyr-41 alone increases binding affinity of Plasmodium knowlesi parasites and likely promotes invasion of red blood cells. Found in adult kidney, adult spleen, bone marrow and fetal liver. In particular, it is expressed along postcapillary venules throughout the body, except in the adult liver. Erythroid cells and postcapillary venule endothelium are the principle tissues expressing duffy. Fy(-A-B) individuals do not express duffy in the bone marrow, however they do, in postcapillary venule endothelium.

The protein localises to the early endosome. It localises to the recycling endosome. Its subcellular location is the membrane. Atypical chemokine receptor that controls chemokine levels and localization via high-affinity chemokine binding that is uncoupled from classic ligand-driven signal transduction cascades, resulting instead in chemokine sequestration, degradation, or transcytosis. Also known as interceptor (internalizing receptor) or chemokine-scavenging receptor or chemokine decoy receptor. Has a promiscuous chemokine-binding profile, interacting with inflammatory chemokines of both the CXC and the CC subfamilies but not with homeostatic chemokines. Acts as a receptor for chemokines including CCL2, CCL5, CCL7, CCL11, CCL13, CCL14, CCL17, CXCL5, CXCL6, IL8/CXCL8, CXCL11, GRO, RANTES, MCP-1 and TARC. May regulate chemokine bioavailability and, consequently, leukocyte recruitment through two distinct mechanisms: when expressed in endothelial cells, it sustains the abluminal to luminal transcytosis of tissue-derived chemokines and their subsequent presentation to circulating leukocytes; when expressed in erythrocytes, serves as blood reservoir of cognate chemokines but also as a chemokine sink, buffering potential surges in plasma chemokine levels. In terms of biological role, (Microbial infection) Acts as a receptor for the malaria parasite Plasmodium vivax. Functionally, (Microbial infection) Acts as a receptor for the malaria parasite Plasmodium knowlesi. The chain is Atypical chemokine receptor 1 (ACKR1) from Homo sapiens (Human).